The following is an 84-amino-acid chain: MLGINVKKTNEELIISWQLAEITIPLRDVIEVTEDATYAGVEEVDVIRIGTAYGTTDRILIKTVKQNYVLFTTNKVAILNAIHA.

Belongs to the UPF0457 family.

The chain is UPF0457 protein BC_3525 from Bacillus cereus (strain ATCC 14579 / DSM 31 / CCUG 7414 / JCM 2152 / NBRC 15305 / NCIMB 9373 / NCTC 2599 / NRRL B-3711).